The primary structure comprises 671 residues: DNA ligase (671 aa).

NAD(+)-binding positions include 32-36, 81-82, and E113; these read DAEYD and SL. The active-site N6-AMP-lysine intermediate is the K115. Residues R136, E173, K290, and K314 each coordinate NAD(+). Residues C408, C411, C426, and C432 each coordinate Zn(2+). The region spanning 593 to 671 is the BRCT domain; sequence EIDSPFAGKT…EAEMLRLFGE (79 aa).

It belongs to the NAD-dependent DNA ligase family. LigA subfamily. Mg(2+) serves as cofactor. It depends on Mn(2+) as a cofactor.

The enzyme catalyses NAD(+) + (deoxyribonucleotide)n-3'-hydroxyl + 5'-phospho-(deoxyribonucleotide)m = (deoxyribonucleotide)n+m + AMP + beta-nicotinamide D-nucleotide.. Its function is as follows. DNA ligase that catalyzes the formation of phosphodiester linkages between 5'-phosphoryl and 3'-hydroxyl groups in double-stranded DNA using NAD as a coenzyme and as the energy source for the reaction. It is essential for DNA replication and repair of damaged DNA. The polypeptide is DNA ligase (Enterobacter sp. (strain 638)).